Here is a 146-residue protein sequence, read N- to C-terminus: MKKIDVTEAIFAIKKEKNLTWEAIADAVGMTDVWITSACLGMNSCTEEVAEKLVAFLGLPAEAKSVLMEYPTKTWDEAIPQDPLIYRLYEVVGVYGPTLKEVIQEKFGDGIMSAIDFSMKVDKEENPKGDRVILTMNGKFLPYKSW.

Residues Arg87, Glu90, and Ser113 contribute to the active site.

The protein belongs to the cyanase family.

The enzyme catalyses cyanate + hydrogencarbonate + 3 H(+) = NH4(+) + 2 CO2. Functionally, catalyzes the reaction of cyanate with bicarbonate to produce ammonia and carbon dioxide. The sequence is that of Cyanate hydratase from Marinomonas sp. (strain MWYL1).